Reading from the N-terminus, the 282-residue chain is Bifunctional protein FolD (282 aa).

NADP(+)-binding positions include glycine 165–serine 167 and isoleucine 231.

This sequence belongs to the tetrahydrofolate dehydrogenase/cyclohydrolase family. In terms of assembly, homodimer.

The enzyme catalyses (6R)-5,10-methylene-5,6,7,8-tetrahydrofolate + NADP(+) = (6R)-5,10-methenyltetrahydrofolate + NADPH. It carries out the reaction (6R)-5,10-methenyltetrahydrofolate + H2O = (6R)-10-formyltetrahydrofolate + H(+). It participates in one-carbon metabolism; tetrahydrofolate interconversion. In terms of biological role, catalyzes the oxidation of 5,10-methylenetetrahydrofolate to 5,10-methenyltetrahydrofolate and then the hydrolysis of 5,10-methenyltetrahydrofolate to 10-formyltetrahydrofolate. The chain is Bifunctional protein FolD from Francisella tularensis subsp. novicida (strain U112).